Reading from the N-terminus, the 365-residue chain is Methionine import ATP-binding protein MetN (365 aa).

The region spanning 26 to 261 (VRLVDLKRRF…PQSDITKSLL (236 aa)) is the ABC transporter domain. 58–65 (GRSGAGKS) contributes to the ATP binding site.

Belongs to the ABC transporter superfamily. Methionine importer (TC 3.A.1.24) family. The complex is composed of two ATP-binding proteins (MetN), two transmembrane proteins (MetI) and a solute-binding protein (MetQ).

The protein localises to the cell inner membrane. The catalysed reaction is L-methionine(out) + ATP + H2O = L-methionine(in) + ADP + phosphate + H(+). It catalyses the reaction D-methionine(out) + ATP + H2O = D-methionine(in) + ADP + phosphate + H(+). Functionally, part of the ABC transporter complex MetNIQ involved in methionine import. Responsible for energy coupling to the transport system. This chain is Methionine import ATP-binding protein MetN, found in Mesorhizobium japonicum (strain LMG 29417 / CECT 9101 / MAFF 303099) (Mesorhizobium loti (strain MAFF 303099)).